The following is a 172-amino-acid chain: RNA silencing suppressor p19 (172 aa).

Positions 1–20 (MERAIQGNDAREQANSERWD) are enriched in basic and acidic residues. Residues 1–38 (MERAIQGNDAREQANSERWDGGSGSSTSPFQLPDESPS) are disordered.

Belongs to the tombusvirus protein p19 family. In terms of assembly, homodimer.

Functionally, viral suppressor of RNA silencing which binds specifically to silencing RNAs (siRNAs). Acts as a molecular caliper to specifically select siRNAs based on the length of the duplex region of the RNA. This chain is RNA silencing suppressor p19, found in Tomato bushy stunt virus (strain type) (TBSV).